Reading from the N-terminus, the 598-residue chain is MNKKKIFGFSRIVLVWILFFSGSSLLLGRLFYLQVMKGSWLTNKAKNQQTIILNTFQPRRTICDRNGIPLAIDTLAYDIFAHPLHFKKSTFDIANELYSILNLDVEYLQNLFIKNTTGICIAHQAPEQIANQIIAKNIEGIELVQHPKRYYPYKQLCADVIGYVNTLHEGQAGLELSCQESLQLQSPEVVSAIDGRGFLINDGIPRELFKQDSLCLQLTIDLDLQKASYLAIYDGIKKCNAKRGTVIILDPYTGAILALVTAPSYDPNVYYDFPIERFKNWPVIDLYEPGSTFKPINMAIALEAKAIKKNDFFYDEGCIQISDTIITNNNYYNKQFACDKNSHLNITDVLSNSSNVGMVHILQRLAPEIYYQWIQKLGLGNNVFLETDFPLSSYSSLKNILEFTSYNIESAVTSFGQGLAMTPIKLAQLYACLSNGGNIIRPYIVDGLFDIQNEKLFTLNNNIFDQNISLKRKLLKTKVFSPSTTEIVLDMLEEVIFNGTGSSCFLPGYRIGGKTGTSQKHAEQGGYSTKHILTSFAAIFPINNPQYVILSVIDEPSIPLSFGSNTAGPVVRSIIESLIRIKKIPPSIPTLTHHYYCK.

The chain crosses the membrane as a helical span at residues 12–33 (IVLVWILFFSGSSLLLGRLFYL). Residue serine 291 is the Acyl-ester intermediate of the active site.

This sequence belongs to the transpeptidase family.

Its subcellular location is the plastid. It is found in the chloroplast membrane. It carries out the reaction Preferential cleavage: (Ac)2-L-Lys-D-Ala-|-D-Ala. Also transpeptidation of peptidyl-alanyl moieties that are N-acyl substituents of D-alanine.. This Mesostigma viride (Green alga) protein is Peptidoglycan D,D-transpeptidase FtsI homolog (ftsI).